Here is a 171-residue protein sequence, read N- to C-terminus: MNKANSFNKEELIACGHGKLFGPNSPRLPVDNMLMIDRIITINDNGGEFGKGEIVAELDINPDLWFFGCHFISDPVMPGCLGLDAMWQLVGFYLGWEGAEGKGRALGVGEVKFTGQVLPGAKKVTYKLNIKRTIHRKLVMGIADAILEVDGRQIYSATDLKVGVFSDTSTF.

Histidine 70 is an active-site residue.

The protein belongs to the thioester dehydratase family. FabA subfamily. Homodimer.

The protein resides in the cytoplasm. It carries out the reaction a (3R)-hydroxyacyl-[ACP] = a (2E)-enoyl-[ACP] + H2O. The enzyme catalyses (3R)-hydroxydecanoyl-[ACP] = (2E)-decenoyl-[ACP] + H2O. It catalyses the reaction (2E)-decenoyl-[ACP] = (3Z)-decenoyl-[ACP]. Its pathway is lipid metabolism; fatty acid biosynthesis. Necessary for the introduction of cis unsaturation into fatty acids. Catalyzes the dehydration of (3R)-3-hydroxydecanoyl-ACP to E-(2)-decenoyl-ACP and then its isomerization to Z-(3)-decenoyl-ACP. Can catalyze the dehydratase reaction for beta-hydroxyacyl-ACPs with saturated chain lengths up to 16:0, being most active on intermediate chain length. The sequence is that of 3-hydroxydecanoyl-[acyl-carrier-protein] dehydratase from Shewanella sp. (strain MR-4).